The primary structure comprises 1081 residues: MDIRKEKRLNMALQMSNFKKALNRFEKLVEQTAAQKRDERAGLFIHKEDAIGYDKFYASVQKLFGPDVKNQDVKRFYRKLCNNTDASADWCEIFGYFSSEEDPIASQLDEENLVFFVSRKRRILISGSRRRDVIKSIVKIPHLDLLITATQKGLITVFNNQDTSWITGCDYLLQLKRIVATTERTIIVWDYKAQGSSQENYFVIKPMDHCLLCVCVVPLPDHLCRDDILLGDDGGFVNRFTVNSDDFGIKQAKSKRKLQNQVLDSKNFKSVKRKLHNDWVMKIRYISALNCFGSCSLDSNHSLVLESLKRLEDNLPVREFSMPRGANTFCYCVKANVIVTGGDDKVIRLWHPNISTKPVGKLVGHMFSIAEIVTNEKDQHVVSLSSAKVFRVWDIQTLSLLQVFHDSQGGPGDMQIYSMIYDANHGMLITGSSVMDMYPLTRMIQDTKQVPHTHEREINVMLYNKYFHQVLTICSESIIRVWELETGLQVYQILEPHGFNTEVTSAAVDESGFLFATGAYNGTVRIWDFGSGQEMKVLPEGKDWKEDEHCLRRLIFLKAQEKHQQLVLALERNGTIKMIQGKEDDIYLMVIWELPDVVPFLQDGKHAVHLRMSTRDRNMAIPFPDVELIVERNFSQPTDNPTMDLLRVNCIDLLQVEGYNLIAAGTLNGVIILWNFVTSTVKKVYRPEDCFTVNPDLHPKHFKINDILFLFRTPECARRSSQDSICSSSQCESSKGPQSSKGSKQSIHDSEVKGEQTDVMVGKQQPMDKKHPGIANLPEAQPPILVTAHEDGHLRLWTLEGRLLKDMLPFTKHSAISLTSLYTDSCTRILLAGNVEGHVILCNISSFLDPPHDEKKFKQLLSWRAHSLEIIQVIYVEEKQVVLTASIDGSVRLWHALNGHYCGYFGQRRLFELSQTRDFILPCDVTEYPIEIKEESKFTEKQKYEYPLIFDREKWRKMSSVSLLFKRTPPKAFEVEQDFKFFKSLSSPKIRRYPLEGFVTENREAGIVFGSLPIYSISSPTSLRFLPLIGVEAQKDSSDGITGKKKGGHVQREKAPRRRSLKKNLVPQINLASSFFPAIPK.

14 WD repeats span residues 102 to 152, 153 to 198, 199 to 265, 266 to 314, 315 to 356, 357 to 400, 401 to 444, 445 to 488, 489 to 532, 533 to 631, 632 to 740, 741 to 803, 804 to 857, and 858 to 895; these read DPIA…ATQK, GLIT…GSSQ, ENYF…VLDS, KNFK…LEDN, LPVR…NIST, KPVG…TLSL, LQVF…TRMI, QDTK…ETGL, QVYQ…FGSG, QEMK…LIVE, RNFS…PQSS, KGSK…EGRL, LKDM…EKKF, and KQLL…RLWH. A compositionally biased stretch (low complexity) spans 726 to 745; sequence CSSSQCESSKGPQSSKGSKQ. A disordered region spans residues 726–757; it reads CSSSQCESSKGPQSSKGSKQSIHDSEVKGEQT. The span at 746–756 shows a compositional bias: basic and acidic residues; the sequence is SIHDSEVKGEQ. Residues 1036-1060 are disordered; sequence DSSDGITGKKKGGHVQREKAPRRRS. Over residues 1043 to 1060 the composition is skewed to basic residues; it reads GKKKGGHVQREKAPRRRS.

This chain is WD repeat-containing protein 64 (WDR64), found in Homo sapiens (Human).